Here is a 99-residue protein sequence, read N- to C-terminus: MMNMQNMMKQAQKLQKQMEQKQADLAAMQFTGKSAQELVTATFTGDKQLVSIDFKEAVVDPEDIETLQDMTAQAINAALAQIDEATKKTLGAFAGKLPF.

The protein belongs to the YbaB/EbfC family. Homodimer.

It is found in the cytoplasm. Its subcellular location is the nucleoid. Functionally, binds to DNA and alters its conformation. May be involved in regulation of gene expression, nucleoid organization and DNA protection. This is Nucleoid-associated protein SEQ_0368 from Streptococcus equi subsp. equi (strain 4047).